A 404-amino-acid polypeptide reads, in one-letter code: Multidrug resistance protein MdtG (404 aa).

11 helical membrane passes run L19–V39, L56–A76, L90–I110, A113–V133, T144–A164, P171–I191, L222–L242, I254–P274, I288–T308, F317–N337, and A376–L396.

This sequence belongs to the major facilitator superfamily. DHA1 family. MdtG (TC 2.A.1.2.20) subfamily.

The protein localises to the cell inner membrane. The sequence is that of Multidrug resistance protein MdtG from Salmonella arizonae (strain ATCC BAA-731 / CDC346-86 / RSK2980).